Consider the following 268-residue polypeptide: Undecaprenyl-diphosphatase (268 aa).

Helical transmembrane passes span 47 to 67 (FAVL…FVKL), 83 to 103 (FVIG…AFGG), 109 to 129 (LFNP…LLWV), 144 to 164 (FPLL…IPGV), 184 to 204 (AAEF…VYDL), 217 to 237 (IIVA…VKTF), and 248 to 268 (LFAW…ALGL).

The protein belongs to the UppP family.

It localises to the cell inner membrane. It carries out the reaction di-trans,octa-cis-undecaprenyl diphosphate + H2O = di-trans,octa-cis-undecaprenyl phosphate + phosphate + H(+). Catalyzes the dephosphorylation of undecaprenyl diphosphate (UPP). Confers resistance to bacitracin. This is Undecaprenyl-diphosphatase from Rhodopseudomonas palustris (strain ATCC BAA-98 / CGA009).